The primary structure comprises 176 residues: NAD(P)H-quinone oxidoreductase subunit 6, chloroplastic (176 aa).

5 helical membrane-spanning segments follow: residues 10–30 (FLLVFLGSGLILGSLGVVLLT), 32–52 (PIFSAFSLGLTLVCISLLYIL), 63–83 (LLIYVGAINVLIIFGVMFMNG), 92–112 (LWTVGDGMTLMVCTSIFISLI), and 152–172 (FFLPFELISIILLAALIGAIV).

This sequence belongs to the complex I subunit 6 family. In terms of assembly, NDH is composed of at least 16 different subunits, 5 of which are encoded in the nucleus.

Its subcellular location is the plastid. The protein resides in the chloroplast thylakoid membrane. The enzyme catalyses a plastoquinone + NADH + (n+1) H(+)(in) = a plastoquinol + NAD(+) + n H(+)(out). It carries out the reaction a plastoquinone + NADPH + (n+1) H(+)(in) = a plastoquinol + NADP(+) + n H(+)(out). In terms of biological role, NDH shuttles electrons from NAD(P)H:plastoquinone, via FMN and iron-sulfur (Fe-S) centers, to quinones in the photosynthetic chain and possibly in a chloroplast respiratory chain. The immediate electron acceptor for the enzyme in this species is believed to be plastoquinone. Couples the redox reaction to proton translocation, and thus conserves the redox energy in a proton gradient. This Lotus japonicus (Lotus corniculatus var. japonicus) protein is NAD(P)H-quinone oxidoreductase subunit 6, chloroplastic (ndhG).